The sequence spans 397 residues: Lysophospholipid transporter LplT (397 aa).

Transmembrane regions (helical) follow at residues 16-36 (MLAV…LLFA), 53-73 (VLQM…GQFA), 91-111 (LGAG…LVGI), 139-159 (LMES…GILA), 164-184 (LAAL…NLWI), 227-247 (LFWG…PVAL), 253-273 (AMPT…AGAA), 281-301 (TVSR…AFAV), 305-325 (LLPA…FIVP), 352-372 (NVAM…GVPP), and 373-393 (VAVG…LWVW).

It belongs to the major facilitator superfamily. LplT (TC 2.A.1.42) family.

The protein resides in the cell inner membrane. In terms of biological role, catalyzes the facilitated diffusion of 2-acyl-glycero-3-phosphoethanolamine (2-acyl-GPE) into the cell. The protein is Lysophospholipid transporter LplT of Klebsiella pneumoniae subsp. pneumoniae (strain ATCC 700721 / MGH 78578).